A 268-amino-acid chain; its full sequence is Probable ribosomal RNA small subunit methyltransferase A (268 aa).

Positions 23, 25, 50, 71, 95, and 110 each coordinate S-adenosyl-L-methionine.

The protein belongs to the class I-like SAM-binding methyltransferase superfamily. rRNA adenine N(6)-methyltransferase family. RsmA subfamily.

It localises to the cytoplasm. Its function is as follows. Specifically dimethylates two adjacent adenosines in the loop of a conserved hairpin near the 3'-end of 16S rRNA in the 30S particle. May play a critical role in biogenesis of 30S subunits. The chain is Probable ribosomal RNA small subunit methyltransferase A from Pyrococcus horikoshii (strain ATCC 700860 / DSM 12428 / JCM 9974 / NBRC 100139 / OT-3).